Reading from the N-terminus, the 200-residue chain is Holliday junction resolvase RecU (200 aa).

The segment at 1 to 25 (MTIRYPNGKRYNQASQPQKTPIKTH) is disordered. Polar residues predominate over residues 10 to 25 (RYNQASQPQKTPIKTH). The Mg(2+) site is built by Thr85, Asp87, Glu100, and Gln119.

This sequence belongs to the RecU family. The cofactor is Mg(2+).

Its subcellular location is the cytoplasm. It carries out the reaction Endonucleolytic cleavage at a junction such as a reciprocal single-stranded crossover between two homologous DNA duplexes (Holliday junction).. Endonuclease that resolves Holliday junction intermediates in genetic recombination. Cleaves mobile four-strand junctions by introducing symmetrical nicks in paired strands. Promotes annealing of linear ssDNA with homologous dsDNA. Required for DNA repair, homologous recombination and chromosome segregation. The protein is Holliday junction resolvase RecU of Bacillus cereus (strain B4264).